Consider the following 146-residue polypeptide: Small ribosomal subunit protein bS6 (146 aa).

A disordered region spans residues Gln-106–Lys-146. Residues Ala-113 to Arg-124 are compositionally biased toward basic and acidic residues. The segment covering Asn-125–Lys-146 has biased composition (low complexity).

Belongs to the bacterial ribosomal protein bS6 family.

Binds together with bS18 to 16S ribosomal RNA. The protein is Small ribosomal subunit protein bS6 of Oenococcus oeni (strain ATCC BAA-331 / PSU-1).